The primary structure comprises 135 residues: uncharacterized protein (135 aa).

The protein belongs to the transcriptional regulatory CopG/NikR family.

This is an uncharacterized protein from Methanocaldococcus jannaschii (strain ATCC 43067 / DSM 2661 / JAL-1 / JCM 10045 / NBRC 100440) (Methanococcus jannaschii).